The sequence spans 122 residues: MSLTNEQIIEAIGQKTVLEIVELIKAMEETFGVTAAAAVAAGPAVAAAAAEEQTEFNVVLTEAGDKKVNVIKAVRELTGLGLKEAKEKVDGAPQVIAEGVSKEAAEDAKKKLEEAGAKVELK.

Belongs to the bacterial ribosomal protein bL12 family. Homodimer. Part of the ribosomal stalk of the 50S ribosomal subunit. Forms a multimeric L10(L12)X complex, where L10 forms an elongated spine to which 2 to 4 L12 dimers bind in a sequential fashion. Binds GTP-bound translation factors.

In terms of biological role, forms part of the ribosomal stalk which helps the ribosome interact with GTP-bound translation factors. Is thus essential for accurate translation. This chain is Large ribosomal subunit protein bL12, found in Pseudomonas entomophila (strain L48).